The chain runs to 292 residues: E3 ubiquitin-protein ligase trim-21 (292 aa).

The RING-type zinc-finger motif lies at 6–52; the sequence is CEICDDDFSSEEDGDHNPRNLKCSHTLCEGCIKKLLKNGRVVCPFCR. A B box-type zinc finger spans residues 90 to 137; that stretch reads NFPPKCVEHPYNVAEFACIESNCSSKNKLMCQTCEEFGAHKGHAKELL. Residues Cys-95, His-98, Cys-123, and His-129 each coordinate Zn(2+). Residues 152–179 are a coiled coil; it reads INQLKLNIQNCTVKKNELEEAVVKSEQL.

Belongs to the TRIM/RBCC family. As to quaternary structure, interacts with E2 ubiquitin-conjugating enzyme ubc-21. Interacts with ced-6; this mediates interaction of trim-21 with ced-1 and is required for ced-1 ubiquitination. Interacts with nck-1; the interaction is required for ced-1 ubiquitination. As to expression, in early larva, observed mainly in pharyngeal and body wall muscle cells.

The protein localises to the cytoplasm. It carries out the reaction S-ubiquitinyl-[E2 ubiquitin-conjugating enzyme]-L-cysteine + [acceptor protein]-L-lysine = [E2 ubiquitin-conjugating enzyme]-L-cysteine + N(6)-ubiquitinyl-[acceptor protein]-L-lysine.. It functions in the pathway protein modification; protein ubiquitination. Functionally, E3 ubiquitin-protein ligase which catalyzes 'Lys-48'-linked polyubiquitination of ced-1, promoting its proteasomal degradation to maintain appropriate ced-1 levels for apoptotic cell clearance. Acts together with E2 ubiquitin-conjugating enzyme ubc-21. The sequence is that of E3 ubiquitin-protein ligase trim-21 from Caenorhabditis elegans.